Reading from the N-terminus, the 144-residue chain is Small ribosomal subunit protein bS6 (144 aa).

Positions 97 to 144 (EEGPSAMMRKADRDRERDERGGPREGGFRSERGPRRPREEETTASVEE) are disordered. Residues 105–137 (RKADRDRERDERGGPREGGFRSERGPRRPREEE) show a composition bias toward basic and acidic residues.

The protein belongs to the bacterial ribosomal protein bS6 family.

Binds together with bS18 to 16S ribosomal RNA. This is Small ribosomal subunit protein bS6 from Afipia carboxidovorans (strain ATCC 49405 / DSM 1227 / KCTC 32145 / OM5) (Oligotropha carboxidovorans).